Reading from the N-terminus, the 98-residue chain is Large ribosomal subunit protein eL21 (98 aa).

A compositionally biased stretch (basic residues) spans 1-17 (MQRSRGFRSKSRRKMTK). The segment at 1-28 (MQRSRGFRSKSRRKMTKVVREGRSNPIT) is disordered.

Belongs to the eukaryotic ribosomal protein eL21 family.

The sequence is that of Large ribosomal subunit protein eL21 from Methanobrevibacter smithii (strain ATCC 35061 / DSM 861 / OCM 144 / PS).